The following is a 321-amino-acid chain: NADPH-dependent codeinone reductase 1-5 (321 aa).

NADPH contacts are provided by Thr27 and Asp51. Active-site proton donor residues include Tyr56 and His119. His119 is a substrate binding site. 5 residues coordinate NADPH: Gln187, Ser214, Leu216, Ser264, and Arg269.

The protein belongs to the aldo/keto reductase family. Latex secreting cells (laticifer cells). Expressed constitutively and ubiquitously with highest levels in capsules.

The protein resides in the cytoplasm. Its subcellular location is the cytosol. It catalyses the reaction codeine + NADP(+) = codeinone + NADPH + H(+). The catalysed reaction is neopine + NADP(+) = neopinone + NADPH + H(+). The enzyme catalyses morphine + NADP(+) = morphinone + NADPH + H(+). It carries out the reaction neomorphine + NADP(+) = neomorphinone + NADPH + H(+). It functions in the pathway alkaloid biosynthesis; morphine biosynthesis. In terms of biological role, NADPH-dependent codeinone reductase involved in biosynthesis of morphinan-type benzylisoquinoline and opiate alkaloids natural products. Reduces codeinone to codeine in the penultimate step in morphine biosynthesis. Can use morphinone, hydrocodone and hydromorphone as substrate during reductive reaction with NADPH as cofactor, and morphine and dihydrocodeine as substrate during oxidative reaction with NADP as cofactor. Converts morphinone to morphine, and neomorphinone to neomorphine. Reduces irreversibly neopinone, a spontaneous isomer of codeinone, to neopine; in planta, neopine levels are limited to low levels. The protein is NADPH-dependent codeinone reductase 1-5 of Papaver somniferum (Opium poppy).